The following is a 152-amino-acid chain: Transcriptional regulator MraZ (152 aa).

2 SpoVT-AbrB domains span residues 5 to 52 (ANAI…PLPE) and 81 to 124 (ATEG…DHSV).

Belongs to the MraZ family. Forms oligomers.

The protein resides in the cytoplasm. It is found in the nucleoid. This Pseudoalteromonas atlantica (strain T6c / ATCC BAA-1087) protein is Transcriptional regulator MraZ.